The sequence spans 81 residues: Large ribosomal subunit protein uL29c (81 aa).

The protein belongs to the universal ribosomal protein uL29 family.

The protein localises to the plastid. It localises to the chloroplast. This is Large ribosomal subunit protein uL29c from Phaeodactylum tricornutum (strain CCAP 1055/1).